The primary structure comprises 303 residues: Methionyl-tRNA formyltransferase (303 aa).

(6S)-5,6,7,8-tetrahydrofolate is bound at residue 108 to 111; sequence SDLP.

Belongs to the Fmt family.

It catalyses the reaction L-methionyl-tRNA(fMet) + (6R)-10-formyltetrahydrofolate = N-formyl-L-methionyl-tRNA(fMet) + (6S)-5,6,7,8-tetrahydrofolate + H(+). Functionally, attaches a formyl group to the free amino group of methionyl-tRNA(fMet). The formyl group appears to play a dual role in the initiator identity of N-formylmethionyl-tRNA by promoting its recognition by IF2 and preventing the misappropriation of this tRNA by the elongation apparatus. This Rickettsia rickettsii (strain Iowa) protein is Methionyl-tRNA formyltransferase.